The primary structure comprises 123 residues: Protein LLP homolog (123 aa).

Residues 1–21 (MAKSLRSKWKRKMRAEKRKKN) show a composition bias toward basic residues. Disordered stretches follow at residues 1 to 22 (MAKS…KKNA) and 61 to 123 (DLDV…KLAW). Residues 70–89 (ESSKMDTELKRNKKNLRDQH) show a composition bias toward basic and acidic residues. The span at 100–123 (QQKKLKSQCGKKKGKSKQAKKLAW) shows a compositional bias: basic residues.

Belongs to the learning-associated protein family.

It is found in the nucleus. The protein localises to the nucleolus. It localises to the chromosome. Functionally, regulates dendritic and spine growth and synaptic transmission. This is Protein LLP homolog (llph) from Xenopus laevis (African clawed frog).